Reading from the N-terminus, the 711-residue chain is Choline transporter-like protein 2 (711 aa).

Topologically, residues 1–33 are cytoplasmic; it reads MGDERPHYYGKHGTPQKYDPTFKGPIYNRGCTD. Position 14 is a phosphothreonine (T14). Residues 34-54 form a helical membrane-spanning segment; the sequence is VICCVFLLVAIVGYVAVGIIA. The Extracellular portion of the chain corresponds to 55–232; the sequence is WTHGDPRKVI…RIFEDYTVSW (178 aa). Residues N187 and N200 are each glycosylated (N-linked (GlcNAc...) asparagine). Residues 233–253 form a helical membrane-spanning segment; it reads YWIIIGLVIAMAMSLLFIILL. Residues 254-256 lie on the Cytoplasmic side of the membrane; the sequence is RFL. The helical transmembrane segment at 257–277 threads the bilayer; that stretch reads AGIMVWVMIIMVILVLGYGIF. At 278–315 the chain is on the extracellular side; that stretch reads HCYMEYSRLRGEAGSDVSLVDLGFQTDFRVYLHLRQTW. The chain crosses the membrane as a helical span at residues 316–336; sequence LAFMIILSILEVIIILLLIFL. Over 337 to 364 the chain is Cytoplasmic; sequence RKRILIAIALIKEASRAVGYVMCTMLYP. Residues 365–385 form a helical membrane-spanning segment; the sequence is LVTFFLLCLCIAYWASTAVFL. Residues 386 to 440 are Extracellular-facing; that stretch reads STSNEAVYKIFDDGLCPFTAKTCNPETFPSSNESRQCPNARCQFAFYGGESGYHR. N417 carries an N-linked (GlcNAc...) asparagine glycan. Residues 441–461 traverse the membrane as a helical segment; sequence ALLGLQIFNAFMFFWLANFVL. Residues 462 to 504 are Cytoplasmic-facing; sequence ALGQVTLAGAFASYYWALRKPDDLPAFPLFSAFGRALRYHTGS. Residues 505–525 form a helical membrane-spanning segment; it reads LAFGALILAIVQIIRVILEYL. Residues 526 to 563 lie on the Extracellular side of the membrane; that stretch reads DQRLKAAENKFAKCLMTCLKCCFWCLEKFIKFLNRNAY. The helical transmembrane segment at 564-584 threads the bilayer; sequence IMIAIYGTNFCTSARNAFFLL. At 585 to 599 the chain is on the cytoplasmic side; the sequence is MRNIIRVAVLDKVTD. The helical transmembrane segment at 600–620 threads the bilayer; the sequence is FLFLLGKLLIVGSVGILAFFF. At 621 to 638 the chain is on the extracellular side; the sequence is FTHRIRIVQDTAPPLNYY. Residues 639-659 form a helical membrane-spanning segment; sequence WVPILTVIVGSYLIAHGFFSV. Topologically, residues 660-711 are cytoplasmic; sequence YGMCVDTLFLCFCEDLERNDGSQERPYFMSPELRDILLKGSAEEGKRAEAEE.

Belongs to the CTL (choline transporter-like) family. Interacts with COCH. Post-translationally, N-glycosylated.

The protein localises to the cell membrane. The protein resides in the mitochondrion outer membrane. It catalyses the reaction choline(out) + n H(+)(in) = choline(in) + n H(+)(out). The enzyme catalyses ethanolamine(out) + n H(+)(in) = ethanolamine(in) + n H(+)(out). Its function is as follows. Choline/H+ antiporter, mainly in mitochodria. Also acts as a low-affinity ethanolamine/H+ antiporter, regulating the supply of extracellular ethanolamine (Etn) for the CDP-Etn pathway, redistribute intracellular Etn and balance the CDP-Cho and CDP-Etn arms of the Kennedy pathway. In Pongo abelii (Sumatran orangutan), this protein is Choline transporter-like protein 2 (SLC44A2).